A 112-amino-acid polypeptide reads, in one-letter code: uncharacterized protein (112 aa).

2 N-linked (GlcNAc...) asparagine; by host glycosylation sites follow: asparagine 29 and asparagine 60. The helical transmembrane segment at 66–86 threads the bilayer; that stretch reads IFNGLGFILIVIFIYLLLITL.

This sequence belongs to the asfivirus B117L family.

The protein localises to the host membrane. It is found in the virion. This is an uncharacterized protein from Ornithodoros (relapsing fever ticks).